Here is a 386-residue protein sequence, read N- to C-terminus: N-terminal EF-hand calcium-binding protein 2 (386 aa).

Arg10 is subject to Omega-N-methylarginine. An Asymmetric dimethylarginine modification is found at Arg42. 2 EF-hand domains span residues 60 to 95 (GGTAVILDIFRRADKNDDGKLSLEEFQLFFADGVLN) and 96 to 129 (EKELEDLFHTIDSDNTNHVDTKELCDYFVDHMGD). Asp73, Asn75, Asp77, Lys79, Glu84, Asp107, Asp109, Thr111, His113, and Glu118 together coordinate Ca(2+). Residues 170 to 201 (LKETANQIQSLLSSVESAVEAIEEQTSQLRQN) are a coiled coil. Positions 286–375 (QLVRQEMAVC…SQPEALSRIL (90 aa)) constitute an ABM domain.

As to quaternary structure, interacts (calcium-dependent) with ADORA2A and GRM5. Expressed in brain. Expressed in the spinal dorsal horn with especially strong expression in lamina IIi; found in excitory synaptic boutons and in ependymal cells (at protein level).

It localises to the cytoplasm. It is found in the cell projection. The protein localises to the dendrite. The protein resides in the axon. Its subcellular location is the cell membrane. May act as a signaling scaffold protein that senses intracellular calcium. Can modulate ligand-induced internalization of ADORA2A and coupling efficiency of mGluR5/GRM5; for both receptors may regulate signaling activity such as promoting MAPK1/3 (ERK1/2) activation. This chain is N-terminal EF-hand calcium-binding protein 2 (NECAB2), found in Homo sapiens (Human).